Consider the following 278-residue polypeptide: Phage-like element PBSX protein XkdB (278 aa).

The segment at residues 58-80 (LKAREMAAVFGVSEKTVRRWLEL) is a DNA-binding region (H-T-H motif). Disordered regions lie at residues 117-136 (SLKE…RTDI) and 239-278 (QHER…RKQV). The segment covering 248–263 (KTNNRTDFGRAEKRET) has biased composition (basic and acidic residues).

This sequence to B.subtilis YqaL.

This Bacillus subtilis (strain 168) protein is Phage-like element PBSX protein XkdB (xkdB).